Consider the following 482-residue polypeptide: Histone deacetylase 1 (482 aa).

The histone deacetylase stretch occupies residues R9–D321. 2 residues coordinate 1D-myo-inositol 1,4,5,6-tetrakisphosphate: G27 and K31. An N6-acetyllysine; alternate modification is found at K74. Residue K74 forms a Glycyl lysine isopeptide (Lys-Gly) (interchain with G-Cter in SUMO2); alternate linkage. H141 is a catalytic residue. The Zn(2+) site is built by D176 and H178. The residue at position 220 (K220) is an N6-acetyllysine. Position 261 is an S-nitrosocysteine (C261). Position 264 (D264) interacts with Zn(2+). R270 contacts 1D-myo-inositol 1,4,5,6-tetrakisphosphate. C273 carries the S-nitrosocysteine modification. The span at P390–D400 shows a compositional bias: acidic residues. The disordered stretch occupies residues P390 to A482. A phosphoserine mark is found at S393, S406, S409, S421, and S423. Basic and acidic residues predominate over residues P401–C416. Positions E417–G427 are enriched in acidic residues. K432 is modified (N6-methylated lysine; by EHMT2). K438 participates in a covalent cross-link: Glycyl lysine isopeptide (Lys-Gly) (interchain with G-Cter in SUMO2). A compositionally biased stretch (basic and acidic residues) spans V443–A482. K444 participates in a covalent cross-link: Glycyl lysine isopeptide (Lys-Gly) (interchain with G-Cter in SUMO2); alternate. K444 is covalently cross-linked (Glycyl lysine isopeptide (Lys-Gly) (interchain with G-Cter in SUMO); alternate). Residues K456, K457, and K473 each participate in a glycyl lysine isopeptide (Lys-Gly) (interchain with G-Cter in SUMO2) cross-link. A Glycyl lysine isopeptide (Lys-Gly) (interchain with G-Cter in SUMO2); alternate cross-link involves residue K476. K476 is covalently cross-linked (Glycyl lysine isopeptide (Lys-Gly) (interchain with G-Cter in SUMO); alternate). Residue K480 forms a Glycyl lysine isopeptide (Lys-Gly) (interchain with G-Cter in SUMO2) linkage.

It belongs to the histone deacetylase family. HD type 1 subfamily. Part of the core histone deacetylase (HDAC) complex composed of HDAC1, HDAC2, RBBP4 and RBBP7, the core complex associates with SIN3, SAP18 and SAP30 to form the SIN3 HDAC complex. Component of the nucleosome remodeling and deacetylase (NuRD) repressor complex, composed of core proteins MTA1, MTA2, MTA3, RBBP4, RBBP7, HDAC1, HDAC2, MBD2, MBD3, and peripherally associated proteins CDK2AP1, CDK2AP2, GATAD2A, GATAD2B, CHD3, CHD4 and CHD5. The exact stoichiometry of the NuRD complex is unknown, and some subunits such as MBD2 and MBD3, GATAD2A and GATAD2B, and CHD3, CHD4 and CHD5 define mutually exclusive NuRD complexes. Component of a BHC histone deacetylase complex that contains HDAC1, HDAC2, HMG20B/BRAF35, KDM1A, RCOR1/CoREST and PHF21A/BHC80. The BHC complex may also contain ZMYM2, ZNF217, ZMYM3, GSE1 and GTF2I. Component of a mSin3A corepressor complex that contains SIN3A, SAP130, SUDS3/SAP45, ARID4B/SAP180, HDAC1 and HDAC2. Found in a trimeric complex with APBB1 and TSHZ3; the interaction between HDAC1 and APBB1 is mediated by TSHZ3. Forms a complex comprising APPL1, RUVBL2, APPL2, CTNNB1 and HDAC2. Component of a RCOR/GFI/KDM1A/HDAC complex. Part of a complex composed of TRIM28, HDAC1, HDAC2 and EHMT2. Part of a complex containing at least CDYL, MIER1, MIER2, HDAC1 and HDAC2. The large PER complex involved in the histone deacetylation is composed of at least HDAC1, PER2, SFPQ and SIN3A. Associates with the 9-1-1 complex; interacts with HUS1. Found in a complex with DNMT3A and HDAC7. Found in a complex with YY1, SIN3A and GON4L. Identified in a histone deacetylase complex that contains DNTTIP1, HDAC1 and MIDEAS; this complex assembles into a tetramer that contains four copies of each protein chain. Found in a complex composed of at least SINHCAF, SIN3A, HDAC1, SAP30, RBBP4, OGT and TET1. Component of the SIN3B complex, which includes SIN3B, HDAC1, PHF12 and MORF4L1. Interacts with GFI1; the interaction is direct. Interacts directly with GFI1B. Interacts with TSHZ3 (via N-terminus); the interaction is direct. Interacts with APEX1; the interaction is not dependent on the acetylated status of APEX1. Interacts with BANP. Interacts with BAZ2A/TIP5. Interacts with BCL6. Interacts with BCOR. Interacts with BHLHE40/DEC1. Interacts with BRCC3; this interaction is enhanced in the presence of PWWP2B. Interacts with BRMS1. Interacts with BRMS1L. Interacts with C10orf90/FATS (via its N-terminal); the interaction prevents binding of HDAC1 to CDKN1A/p21 and facilitates the acetylation and stabilization of CDKN1A/p21. Interacts with CBFA2T3. Interacts with CCAR2. Interacts with CDK2AP1. Interacts with CHD3. Interacts with CHD4. Interacts with CHFR. Interacts with CIART. Interacts with CDKN1A/p21. Interacts with CDK5 complexed to CDK5R1 (p25). Interacts with CRY1. Interacts with DAXX. Interacts with DDIT3/CHOP. Interacts with DDX5. Interacts with DHX36; this interaction occurs in a RNA-dependent manner. Interacts with DNMT1. Interacts with DNTTIP1. Interacts with E4F1. Interacts with EP300. Interacts with ERCC6. Interacts with GATAD2A. Interacts with HCFC1. Interacts with HDAC9. Interacts with HUS1. Interacts with INSM1. Interacts with KDM4A. Interacts with KDM5A; this interaction impairs histone deacetylation. Interacts with KDM5B. Interacts with KLF1. Interacts with MBD3L2. Interacts with MIER1. Interacts with NFE4. Interacts with NR4A2/NURR1. Interacts with NR1D2 (via C-terminus). Interacts with NRIP1. Interacts with NSD2. Interacts with PACS2. Interacts with PHB2. Interacts with PPHLN1. Interacts with PRDM6. Interacts with PRDM16. Interacts with PWWP2A in a MTA1-dependent manner. Interacts with PWWP2B. Interacts with RB1. Interacts with RERE. Interacts with SANBR (via the BTB domain). Interacts with SAMSN1. Interacts with SAP30L. Interacts with SETDB1. Interacts with SIN3A. Interacts with SMAD3. Interacts with SMAD4; positively regulated by ZBTB7A. Interacts with SMARCAD1. Interacts with SMARCA4/BRG1. Interacts with SMYD2. Interacts with SMYD4 (via MYND-type zinc finger). Interacts with SP1; the interaction deacetylates SP1 and regulates its transcriptional activity. Interacts with SP3; the interaction deacetylates SP3 and regulates its transcriptional activity. In vitro, C(18) ceramides increase this interaction and the subsequent SP3 deacetylation and SP3-mediated repression of the TERT promoter. Interacts with SPEN/MINT. Interacts with SPHK2. Interacts with SUV39H1. Interacts with TGIF. Interacts with TGIF2. Interacts with TRAF6. Interacts with TRIM28; the interaction recruits HDAC1 to E2F1 and inhibits its acetylation. Interacts with TSC22D3 isoform 1; this interaction affects HDAC1 activity on MYOG promoter and thus inhibits MYOD1 transcriptional activity. Interacts with UHRF1. Interacts with UHRF2. Interacts with ZBTB7A. Interacts with ZMYND8. Interacts with ZMYND15. Interacts with ZNF431. Interacts with ZNF516; this interaction is enhanced in the presence of PWWP2B. Interacts with ZNF541. Interacts with ZNF638. Interacts with ZNHIT1. Interacts with the non-histone region of MACROH2A1. Identified in a complex with HDAC2, KCTD19, DNTTIP1 and ZNF541. Interacts with MSX3. Interacts with VRK1. Requires Zn(2+) as cofactor. Post-translationally, sumoylated on Lys-444 and Lys-476; which promotes enzymatic activity. Desumoylated by SENP1. In terms of processing, phosphorylation on Ser-421 and Ser-423 promotes enzymatic activity and interactions with NuRD and SIN3 complexes. Phosphorylated by CDK5. Ubiquitinated by CHFR and KCTD11, leading to its degradation by the proteasome.

It localises to the nucleus. The catalysed reaction is N(6)-acetyl-L-lysyl-[histone] + H2O = L-lysyl-[histone] + acetate. It catalyses the reaction N(6)-acetyl-L-lysyl-[protein] + H2O = L-lysyl-[protein] + acetate. It carries out the reaction N(6)-(2E)-butenoyl-L-lysyl-[protein] + H2O = (2E)-2-butenoate + L-lysyl-[protein]. The enzyme catalyses N(6)-[(S)-lactoyl]-L-lysyl-[protein] + H2O = (S)-lactate + L-lysyl-[protein]. Its activity is regulated as follows. Inositol tetraphosphate (1D-myo-inositol 1,4,5,6-tetrakisphosphate) may act as an intermolecular glue between HDAC1 and N-Cor repressor complex components. Functionally, histone deacetylase that catalyzes the deacetylation of lysine residues on the N-terminal part of the core histones (H2A, H2B, H3 and H4). Histone deacetylation gives a tag for epigenetic repression and plays an important role in transcriptional regulation, cell cycle progression and developmental events. Histone deacetylases act via the formation of large multiprotein complexes. Acts as a component of the histone deacetylase NuRD complex which participates in the remodeling of chromatin. As part of the SIN3B complex is recruited downstream of the constitutively active genes transcriptional start sites through interaction with histones and mitigates histone acetylation and RNA polymerase II progression within transcribed regions contributing to the regulation of transcription. Also functions as a deacetylase for non-histone targets, such as NR1D2, RELA, SP1, SP3, STAT3 and TSHZ3. Deacetylates SP proteins, SP1 and SP3, and regulates their function. Component of the BRG1-RB1-HDAC1 complex, which negatively regulates the CREST-mediated transcription in resting neurons. Upon calcium stimulation, HDAC1 is released from the complex and CREBBP is recruited, which facilitates transcriptional activation. Deacetylates TSHZ3 and regulates its transcriptional repressor activity. Deacetylates 'Lys-310' in RELA and thereby inhibits the transcriptional activity of NF-kappa-B. Deacetylates NR1D2 and abrogates the effect of KAT5-mediated relieving of NR1D2 transcription repression activity. Component of a RCOR/GFI/KDM1A/HDAC complex that suppresses, via histone deacetylase (HDAC) recruitment, a number of genes implicated in multilineage blood cell development. Involved in CIART-mediated transcriptional repression of the circadian transcriptional activator: CLOCK-BMAL1 heterodimer. Required for the transcriptional repression of circadian target genes, such as PER1, mediated by the large PER complex or CRY1 through histone deacetylation. In addition to protein deacetylase activity, also has protein-lysine deacylase activity: acts as a protein decrotonylase and delactylase by mediating decrotonylation ((2E)-butenoyl) and delactylation (lactoyl) of histones, respectively. The polypeptide is Histone deacetylase 1 (Hdac1) (Rattus norvegicus (Rat)).